A 447-amino-acid chain; its full sequence is Glutamyl-tRNA reductase (447 aa).

Residues 45–48 (TCNR), Ser-111, 116–118 (ETE), and Gln-122 contribute to the substrate site. Cys-46 (nucleophile) is an active-site residue. Position 191 to 196 (191 to 196 (GTGKYA)) interacts with NADP(+).

The protein belongs to the glutamyl-tRNA reductase family. As to quaternary structure, homodimer.

It carries out the reaction (S)-4-amino-5-oxopentanoate + tRNA(Glu) + NADP(+) = L-glutamyl-tRNA(Glu) + NADPH + H(+). Its pathway is porphyrin-containing compound metabolism; protoporphyrin-IX biosynthesis; 5-aminolevulinate from L-glutamyl-tRNA(Glu): step 1/2. In terms of biological role, catalyzes the NADPH-dependent reduction of glutamyl-tRNA(Glu) to glutamate 1-semialdehyde (GSA). This chain is Glutamyl-tRNA reductase, found in Tropheryma whipplei (strain Twist) (Whipple's bacillus).